We begin with the raw amino-acid sequence, 146 residues long: Hemoglobin subunit beta (146 aa).

Positions 2 to 146 (HWTAEEKQLI…VAHALARKYH (145 aa)) constitute a Globin domain. 2 residues coordinate heme b: histidine 63 and histidine 92.

It belongs to the globin family. Heterotetramer of two alpha chains and two beta chains. In terms of tissue distribution, red blood cells.

Involved in oxygen transport from the lung to the various peripheral tissues. This Anas platyrhynchos platyrhynchos (Northern mallard) protein is Hemoglobin subunit beta (HBB).